A 299-amino-acid chain; its full sequence is MAEFPASLLILNGKSTDNLPLREAIMLLREEGMTIHVRVTWEKGDAARFVEEARKLGVATVIAGGGDGTINEVCTALIQCEGDDIPALGILPLGTANDFATSVGIPEALDKALKLAIAGNAIAIDMAQVNKQTCFINMATGGFGTRITTETPEKLKAALGGVSYIIHGLMRMDTLQPDRCEIRGENFHWQGDALVIGIGNGRQAGGGQQLCPNALINDGLLQLRIFTGDEILPALVSTLKSDEDNPNIIEGASSWFDIQAPHEITFNLDGEPLSGQNFHIEILPAALRCRLPPDCPLLR.

Residues 2-133 (AEFPASLLIL…IDMAQVNKQT (132 aa)) form the DAGKc domain. Residues Thr-40, 66-72 (GDGTINE), and Thr-95 contribute to the ATP site. Residues Leu-215, Asp-218, and Leu-220 each coordinate Mg(2+). Glu-271 serves as the catalytic Proton acceptor.

It belongs to the diacylglycerol/lipid kinase family. YegS lipid kinase subfamily. Mg(2+) is required as a cofactor. Requires Ca(2+) as cofactor.

Its subcellular location is the cytoplasm. In terms of biological role, probably phosphorylates lipids; the in vivo substrate is unknown. This chain is Probable lipid kinase YegS, found in Shigella flexneri.